A 569-amino-acid polypeptide reads, in one-letter code: 2-isopropylmalate synthase (569 aa).

The region spanning 31–305 (PRWMSTDLRD…APELDFSDID (275 aa)) is the Pyruvate carboxyltransferase domain. Mg(2+) contacts are provided by Asp-40, His-244, His-246, and Asn-280. A regulatory domain region spans residues 437–569 (RETPLRYVSH…TASASAATEA (133 aa)).

It belongs to the alpha-IPM synthase/homocitrate synthase family. LeuA type 2 subfamily. Homodimer. Mg(2+) is required as a cofactor.

Its subcellular location is the cytoplasm. The enzyme catalyses 3-methyl-2-oxobutanoate + acetyl-CoA + H2O = (2S)-2-isopropylmalate + CoA + H(+). Its pathway is amino-acid biosynthesis; L-leucine biosynthesis; L-leucine from 3-methyl-2-oxobutanoate: step 1/4. In terms of biological role, catalyzes the condensation of the acetyl group of acetyl-CoA with 3-methyl-2-oxobutanoate (2-ketoisovalerate) to form 3-carboxy-3-hydroxy-4-methylpentanoate (2-isopropylmalate). The polypeptide is 2-isopropylmalate synthase (Cupriavidus taiwanensis (strain DSM 17343 / BCRC 17206 / CCUG 44338 / CIP 107171 / LMG 19424 / R1) (Ralstonia taiwanensis (strain LMG 19424))).